The following is a 241-amino-acid chain: Octanoyltransferase (241 aa).

The BPL/LPL catalytic domain maps to 43–228 (AETPDEIWLV…CLTANLDGSP (186 aa)). Substrate-binding positions include 83–90 (RGGQITYH), 159–161 (ALG), and 172–174 (GVS). The Acyl-thioester intermediate role is filled by C190.

This sequence belongs to the LipB family.

Its subcellular location is the cytoplasm. The catalysed reaction is octanoyl-[ACP] + L-lysyl-[protein] = N(6)-octanoyl-L-lysyl-[protein] + holo-[ACP] + H(+). The protein operates within protein modification; protein lipoylation via endogenous pathway; protein N(6)-(lipoyl)lysine from octanoyl-[acyl-carrier-protein]: step 1/2. In terms of biological role, catalyzes the transfer of endogenously produced octanoic acid from octanoyl-acyl-carrier-protein onto the lipoyl domains of lipoate-dependent enzymes. Lipoyl-ACP can also act as a substrate although octanoyl-ACP is likely to be the physiological substrate. The polypeptide is Octanoyltransferase (Paraburkholderia xenovorans (strain LB400)).